A 39-amino-acid chain; its full sequence is Photosystem II reaction center protein J (39 aa).

Residues 9–29 (LWIIATFGGIAALTVVGLFIY) traverse the membrane as a helical segment.

The protein belongs to the PsbJ family. In terms of assembly, PSII is composed of 1 copy each of membrane proteins PsbA, PsbB, PsbC, PsbD, PsbE, PsbF, PsbH, PsbI, PsbJ, PsbK, PsbL, PsbM, PsbT, PsbX, PsbY, PsbZ, Psb30/Ycf12, at least 3 peripheral proteins of the oxygen-evolving complex and a large number of cofactors. It forms dimeric complexes.

Its subcellular location is the plastid. The protein localises to the chloroplast thylakoid membrane. Its function is as follows. One of the components of the core complex of photosystem II (PSII). PSII is a light-driven water:plastoquinone oxidoreductase that uses light energy to abstract electrons from H(2)O, generating O(2) and a proton gradient subsequently used for ATP formation. It consists of a core antenna complex that captures photons, and an electron transfer chain that converts photonic excitation into a charge separation. This is Photosystem II reaction center protein J from Guillardia theta (Cryptophyte).